A 286-amino-acid polypeptide reads, in one-letter code: ATP synthase gamma chain (286 aa).

Belongs to the ATPase gamma chain family. In terms of assembly, F-type ATPases have 2 components, CF(1) - the catalytic core - and CF(0) - the membrane proton channel. CF(1) has five subunits: alpha(3), beta(3), gamma(1), delta(1), epsilon(1). CF(0) has three main subunits: a, b and c.

The protein resides in the cell membrane. Its function is as follows. Produces ATP from ADP in the presence of a proton gradient across the membrane. The gamma chain is believed to be important in regulating ATPase activity and the flow of protons through the CF(0) complex. The sequence is that of ATP synthase gamma chain from Oceanobacillus iheyensis (strain DSM 14371 / CIP 107618 / JCM 11309 / KCTC 3954 / HTE831).